The chain runs to 491 residues: Acetylcholine receptor subunit epsilon (491 aa).

Residues 1-20 (MAGALLCALLLLQLLGRGEG) form the signal peptide. The Extracellular segment spans residues 21–239 (KNEELRLYHY…VIYSLIIRRK (219 aa)). N-linked (GlcNAc...) asparagine glycosylation is found at Asn-86 and Asn-161. Cysteines 148 and 162 form a disulfide. The chain crosses the membrane as a helical span at residues 240 to 264 (PLFYVINIIVPCVLISGLVLLAYFL). Over 265 to 272 (PAQAGGQK) the chain is Cytoplasmic. The helical transmembrane segment at 273 to 291 (CTVSINVLLAQTVFLFLIA) threads the bilayer. Residues 292–306 (QKTPETSLSVPLLGR) are Extracellular-facing. Residues 307–328 (YLIFVMVVATLIVMNCVIVLNV) form a helical membrane-spanning segment. Residues 329 to 456 (SLRTPTTHAM…WVRMGKALDS (128 aa)) lie on the Cytoplasmic side of the membrane. The chain crosses the membrane as a helical span at residues 457-480 (ICFWAALVLFLVGSSLIFLGAYFN). Residues 481–491 (RVPQLPYPPCM) are Extracellular-facing.

It belongs to the ligand-gated ion channel (TC 1.A.9) family. Acetylcholine receptor (TC 1.A.9.1) subfamily. Epsilon/CHRNE sub-subfamily.

Its subcellular location is the postsynaptic cell membrane. The protein localises to the cell membrane. It catalyses the reaction K(+)(in) = K(+)(out). The enzyme catalyses Na(+)(in) = Na(+)(out). After binding acetylcholine, the AChR responds by an extensive change in conformation that affects all subunits and leads to opening of an ion-conducting channel across the plasma membrane. This Bos taurus (Bovine) protein is Acetylcholine receptor subunit epsilon (CHRNE).